The primary structure comprises 377 residues: Erythronate-4-phosphate dehydrogenase (377 aa).

Serine 45 and threonine 67 together coordinate substrate. NAD(+) contacts are provided by residues 127 to 128 (QV), aspartate 147, and threonine 176. Residue arginine 209 is part of the active site. Aspartate 233 lines the NAD(+) pocket. Glutamate 238 is a catalytic residue. Histidine 255 (proton donor) is an active-site residue. An NAD(+)-binding site is contributed by glycine 258. A substrate-binding site is contributed by tyrosine 259.

The protein belongs to the D-isomer specific 2-hydroxyacid dehydrogenase family. PdxB subfamily. In terms of assembly, homodimer.

Its subcellular location is the cytoplasm. The enzyme catalyses 4-phospho-D-erythronate + NAD(+) = (R)-3-hydroxy-2-oxo-4-phosphooxybutanoate + NADH + H(+). It participates in cofactor biosynthesis; pyridoxine 5'-phosphate biosynthesis; pyridoxine 5'-phosphate from D-erythrose 4-phosphate: step 2/5. Functionally, catalyzes the oxidation of erythronate-4-phosphate to 3-hydroxy-2-oxo-4-phosphonooxybutanoate. The protein is Erythronate-4-phosphate dehydrogenase of Vibrio vulnificus (strain CMCP6).